The sequence spans 334 residues: HTH-type transcriptional repressor PurR (334 aa).

The region spanning 2–56 (ATIKDVARLAGVSTTTVSHVINKTRFVAETTQEKVMKAVDELNYAPSAVARSLKC) is the HTH lacI-type domain. The H-T-H motif DNA-binding region spans 4 to 23 (IKDVARLAGVSTTTVSHVIN). Residues 48 to 56 (SAVARSLKC) mediate DNA binding. Residues Phe-73, Lys-189, Phe-220, and Asp-274 each coordinate hypoxanthine.

In terms of assembly, homodimer.

Its pathway is purine metabolism; purine nucleotide biosynthesis [regulation]. Functionally, is the main repressor of the genes involved in the de novo synthesis of purine nucleotides, regulating purB, purC, purEK, purF, purHD, purL, purMN and guaBA expression. PurR is allosterically activated to bind its cognate DNA by binding the purine corepressors, hypoxanthine or guanine, thereby effecting transcription repression. This Vibrio campbellii (strain ATCC BAA-1116) protein is HTH-type transcriptional repressor PurR.